The sequence spans 157 residues: ESNSKARRGILRRAVFSEDQRKALEKMFQKQKYISKTDRKKLAINLGLKESQVKIWFQNRRMKWRNSKEKEVLSNRCLQEGLQENYLSQSAMNFASPCPSVWEVSQEQTSPRWKEKSPGNSERLTSTQPPPRANSSQSPLYLYPDHDTANKAVTSSD.

A DNA-binding region (homeobox) is located at residues 9–68; the sequence is GILRRAVFSEDQRKALEKMFQKQKYISKTDRKKLAINLGLKESQVKIWFQNRRMKWRNSK. Residues 105–157 are disordered; the sequence is SQEQTSPRWKEKSPGNSERLTSTQPPPRANSSQSPLYLYPDHDTANKAVTSSD. Residues 118–139 show a composition bias toward polar residues; it reads PGNSERLTSTQPPPRANSSQSP.

It belongs to the H2.0 homeobox family. As to expression, localized to the central nervous system during embryogenesis. It is found restricted to the rostro-caudal and dorso-ventral regions of the hindbrain. In the ventricular zone of the spinal cord, it localizes to the dorsal part of the basal plate. In the adult, it is detected in ovary.

Its subcellular location is the nucleus. In terms of biological role, appears to perform a very early function in establishing the identity of a subset of cells that originate in the region of the ventricular zone in the developing spinal cord and in the hindbrain. This is Homeobox protein DBX2 (DBX2) from Gallus gallus (Chicken).